The sequence spans 344 residues: Methionine import ATP-binding protein MetN 1 (344 aa).

One can recognise an ABC transporter domain in the interval 2-241 (IELRNLSQRF…PHHEVTRALI (240 aa)). 38–45 (GRSGAGKS) provides a ligand contact to ATP.

Belongs to the ABC transporter superfamily. Methionine importer (TC 3.A.1.24) family. In terms of assembly, the complex is composed of two ATP-binding proteins (MetN), two transmembrane proteins (MetI) and a solute-binding protein (MetQ).

The protein resides in the cell inner membrane. It catalyses the reaction L-methionine(out) + ATP + H2O = L-methionine(in) + ADP + phosphate + H(+). The enzyme catalyses D-methionine(out) + ATP + H2O = D-methionine(in) + ADP + phosphate + H(+). Part of the ABC transporter complex MetNIQ involved in methionine import. Responsible for energy coupling to the transport system. The chain is Methionine import ATP-binding protein MetN 1 from Burkholderia lata (strain ATCC 17760 / DSM 23089 / LMG 22485 / NCIMB 9086 / R18194 / 383).